Consider the following 208-residue polypeptide: ATP-dependent Clp protease proteolytic subunit (208 aa).

Catalysis depends on Ser-107, which acts as the Nucleophile. His-132 is an active-site residue.

This sequence belongs to the peptidase S14 family. As to quaternary structure, fourteen ClpP subunits assemble into 2 heptameric rings which stack back to back to give a disk-like structure with a central cavity, resembling the structure of eukaryotic proteasomes.

Its subcellular location is the cytoplasm. It carries out the reaction Hydrolysis of proteins to small peptides in the presence of ATP and magnesium. alpha-casein is the usual test substrate. In the absence of ATP, only oligopeptides shorter than five residues are hydrolyzed (such as succinyl-Leu-Tyr-|-NHMec, and Leu-Tyr-Leu-|-Tyr-Trp, in which cleavage of the -Tyr-|-Leu- and -Tyr-|-Trp bonds also occurs).. Cleaves peptides in various proteins in a process that requires ATP hydrolysis. Has a chymotrypsin-like activity. Plays a major role in the degradation of misfolded proteins. The polypeptide is ATP-dependent Clp protease proteolytic subunit (Methylorubrum extorquens (strain CM4 / NCIMB 13688) (Methylobacterium extorquens)).